Here is a 328-residue protein sequence, read N- to C-terminus: Gonadotropin-releasing hormone receptor (328 aa).

The Extracellular segment spans residues 1 to 38 (MANSDSPEQNENHCSSINSSIPLTPGSLPTLTLSGKIR). N-linked (GlcNAc...) asparagine glycosylation is present at Asn-18. Residues 39-58 (VTVTFFLFLLSTIFNTSFLL) traverse the membrane as a helical segment. Topologically, residues 59–77 (KLQNWTQRKEKRKKLSRMK) are cytoplasmic. A helical membrane pass occupies residues 78–97 (LLLKHLTLANLLETLIVMPL). Residues 98–115 (DGMWNITVQWYAGELLCK) lie on the Extracellular side of the membrane. Asn-102 is a glycosylation site (N-linked (GlcNAc...) asparagine). An intrachain disulfide couples Cys-114 to Cys-196. Residues 116-137 (VLSYLKLFSMYAPAFMMVVISL) traverse the membrane as a helical segment. Residues 138–164 (DRSLAITKPLAVKSNSKLGQFMIGLAW) lie on the Cytoplasmic side of the membrane. Residues 165-184 (LLSSIFAGPQLYIFGMIHLA) traverse the membrane as a helical segment. Residues 185 to 212 (DDSGQTEGFSQCVTHCSFPQWWHQAFYN) lie on the Extracellular side of the membrane. The helical transmembrane segment at 213–232 (FFTFSCLFIIPLLIMVICNA) threads the bilayer. Over 233–281 (KIIFTLTRVLHQDPHKLQLNQSKNNIPRARLRTLKMTVAFATSFTVCWT) the chain is Cytoplasmic. The helical transmembrane segment at 282 to 300 (PYYVLGIWYWFDPDMVNRV) threads the bilayer. The Extracellular segment spans residues 301-306 (SDPVNH). Residues 307-326 (FFFLFAFLNPCFNPLIYGYF) traverse the membrane as a helical segment. Topologically, residues 327–328 (SL) are cytoplasmic.

It belongs to the G-protein coupled receptor 1 family.

The protein resides in the cell membrane. Functionally, receptor for gonadotropin releasing hormone (GnRH) that mediates the action of GnRH to stimulate the secretion of the gonadotropic hormones luteinizing hormone (LH) and follicle-stimulating hormone (FSH). This receptor mediates its action by association with G-proteins that activate a phosphatidylinositol-calcium second messenger system. This Bos mutus grunniens (Wild yak) protein is Gonadotropin-releasing hormone receptor (GNRHR).